Here is a 345-residue protein sequence, read N- to C-terminus: tRNA N6-adenosine threonylcarbamoyltransferase (345 aa).

Fe cation is bound by residues His113 and His117. Substrate is bound by residues 142–146 (AISGG), Asp175, Gly188, Asp192, and Asn282. Asp310 serves as a coordination point for Fe cation.

It belongs to the KAE1 / TsaD family. Fe(2+) serves as cofactor.

The protein resides in the cytoplasm. It carries out the reaction L-threonylcarbamoyladenylate + adenosine(37) in tRNA = N(6)-L-threonylcarbamoyladenosine(37) in tRNA + AMP + H(+). Functionally, required for the formation of a threonylcarbamoyl group on adenosine at position 37 (t(6)A37) in tRNAs that read codons beginning with adenine. Is involved in the transfer of the threonylcarbamoyl moiety of threonylcarbamoyl-AMP (TC-AMP) to the N6 group of A37, together with TsaE and TsaB. TsaD likely plays a direct catalytic role in this reaction. The chain is tRNA N6-adenosine threonylcarbamoyltransferase from Bdellovibrio bacteriovorus (strain ATCC 15356 / DSM 50701 / NCIMB 9529 / HD100).